A 335-amino-acid polypeptide reads, in one-letter code: Trans-1,2-dihydrobenzene-1,2-diol dehydrogenase (335 aa).

It belongs to the Gfo/Idh/MocA family. Homodimer.

The enzyme catalyses (1R,2R)-1,2-dihydrobenzene-1,2-diol + NADP(+) = catechol + NADPH + H(+). It carries out the reaction D-xylose + NADP(+) = D-xylono-1,5-lactone + NADPH + H(+). This Bos taurus (Bovine) protein is Trans-1,2-dihydrobenzene-1,2-diol dehydrogenase (DHDH).